A 545-amino-acid polypeptide reads, in one-letter code: Chaperonin GroEL (545 aa).

ATP-binding positions include 30–33 (TLGP), Lys51, 87–91 (DGTTT), Gly415, and Asp495.

Belongs to the chaperonin (HSP60) family. In terms of assembly, forms a cylinder of 14 subunits composed of two heptameric rings stacked back-to-back. Interacts with the co-chaperonin GroES.

The protein localises to the cytoplasm. The catalysed reaction is ATP + H2O + a folded polypeptide = ADP + phosphate + an unfolded polypeptide.. Functionally, together with its co-chaperonin GroES, plays an essential role in assisting protein folding. The GroEL-GroES system forms a nano-cage that allows encapsulation of the non-native substrate proteins and provides a physical environment optimized to promote and accelerate protein folding. This is Chaperonin GroEL from Shewanella sp. (strain ANA-3).